Consider the following 682-residue polypeptide: Serine/threonine-protein kinase PAK 6 (682 aa).

Disordered regions lie at residues 1-30, 132-170, 200-256, and 270-367; these read MFRK…DPKE, SPQS…QALP, LQSS…QESS, and PATG…NLYL. In terms of domain architecture, CRIB spans 12–25; that stretch reads ISAPQNFQHRVHTS. Residues 26–407 are linker; that stretch reads FDPKEGKFVG…VVDQGDPRLL (382 aa). Composition is skewed to polar residues over residues 270 to 279 and 297 to 334; these read PATGAASSSK and KDSS…QKSL. The Protein kinase domain occupies 408-659; the sequence is LDSYVKIGEG…AQELLDHPFL (252 aa). Residues 414 to 422 and lysine 437 contribute to the ATP site; that span reads IGEGSTGIV. Residue aspartate 527 is the Proton acceptor of the active site. Position 561 is a phosphoserine; by autocatalysis (serine 561).

It belongs to the protein kinase superfamily. STE Ser/Thr protein kinase family. STE20 subfamily. As to quaternary structure, interacts tightly with GTP-bound but not GDP-bound CDC42/p21 and RAC1. Interacts with the androgen receptor AR. Interacts with IQGAP1 and PPM1B. Post-translationally, autophosphorylated. Phosphorylated by MAP2K6/MAPKK6, leading to PAK6 activation.

Its subcellular location is the cytoplasm. The protein localises to the nucleus. The enzyme catalyses L-seryl-[protein] + ATP = O-phospho-L-seryl-[protein] + ADP + H(+). It catalyses the reaction L-threonyl-[protein] + ATP = O-phospho-L-threonyl-[protein] + ADP + H(+). Serine/threonine protein kinase that plays a role in the regulation of gene transcription. The kinase activity is induced by various effectors including AR or MAP2K6/MAPKK6. Phosphorylates the DNA-binding domain of androgen receptor/AR and thereby inhibits AR-mediated transcription. Also inhibits ESR1-mediated transcription. May play a role in cytoskeleton regulation by interacting with IQGAP1. May protect cells from apoptosis through phosphorylation of BAD. The protein is Serine/threonine-protein kinase PAK 6 (Pak6) of Mus musculus (Mouse).